Reading from the N-terminus, the 154-residue chain is Aspartate carbamoyltransferase regulatory chain (154 aa).

Positions 109, 114, 138, and 141 each coordinate Zn(2+).

The protein belongs to the PyrI family. As to quaternary structure, contains catalytic and regulatory chains. The cofactor is Zn(2+).

Involved in allosteric regulation of aspartate carbamoyltransferase. This chain is Aspartate carbamoyltransferase regulatory chain, found in Serratia proteamaculans (strain 568).